Consider the following 127-residue polypeptide: Protein ApaG (127 aa).

Residues Glu3–His127 form the ApaG domain.

This Nitrosospira multiformis (strain ATCC 25196 / NCIMB 11849 / C 71) protein is Protein ApaG.